The chain runs to 178 residues: Adenine phosphoribosyltransferase (178 aa).

Belongs to the purine/pyrimidine phosphoribosyltransferase family. As to quaternary structure, homodimer.

Its subcellular location is the cytoplasm. It catalyses the reaction AMP + diphosphate = 5-phospho-alpha-D-ribose 1-diphosphate + adenine. It participates in purine metabolism; AMP biosynthesis via salvage pathway; AMP from adenine: step 1/1. Functionally, catalyzes a salvage reaction resulting in the formation of AMP, that is energically less costly than de novo synthesis. The polypeptide is Adenine phosphoribosyltransferase (Erythrobacter litoralis (strain HTCC2594)).